Consider the following 334-residue polypeptide: NADH-ubiquinone oxidoreductase chain 1 (334 aa).

The next 9 membrane-spanning stretches (helical) occupy residues 4–24, 82–102, 115–135, 161–181, 187–207, 222–242, 247–267, 268–288, and 311–331; these read FVFL…IIVI, FIYV…WGVI, IGIL…LMSG, IGLI…TEIV, GIWF…SALA, ELVS…FFLA, IILM…SPIV, FFKG…LLFI, and LPLS…LNGL.

This sequence belongs to the complex I subunit 1 family.

The protein localises to the mitochondrion inner membrane. It catalyses the reaction a ubiquinone + NADH + 5 H(+)(in) = a ubiquinol + NAD(+) + 4 H(+)(out). Functionally, core subunit of the mitochondrial membrane respiratory chain NADH dehydrogenase (Complex I) that is believed to belong to the minimal assembly required for catalysis. Complex I functions in the transfer of electrons from NADH to the respiratory chain. The immediate electron acceptor for the enzyme is believed to be ubiquinone. The polypeptide is NADH-ubiquinone oxidoreductase chain 1 (ND1) (Metridium senile (Brown sea anemone)).